The primary structure comprises 865 residues: Protein translocase subunit SecA (865 aa).

ATP-binding positions include Gln-93, 111–115 (GEGKT), and Asp-501. Zn(2+) is bound by residues Cys-841, Cys-843, Cys-852, and Cys-853.

Belongs to the SecA family. As to quaternary structure, monomer and homodimer. Part of the essential Sec protein translocation apparatus which comprises SecA, SecYEG and auxiliary proteins SecDF-YajC and YidC. Zn(2+) serves as cofactor.

It is found in the cell inner membrane. The protein localises to the cytoplasm. The catalysed reaction is ATP + H2O + cellular proteinSide 1 = ADP + phosphate + cellular proteinSide 2.. Functionally, part of the Sec protein translocase complex. Interacts with the SecYEG preprotein conducting channel. Has a central role in coupling the hydrolysis of ATP to the transfer of proteins into and across the cell membrane, serving as an ATP-driven molecular motor driving the stepwise translocation of polypeptide chains across the membrane. In Helicobacter pylori (strain J99 / ATCC 700824) (Campylobacter pylori J99), this protein is Protein translocase subunit SecA.